The following is a 718-amino-acid chain: MSNESKCPFSGHNSKPQVTVGGGTANLHWWPNQLRVDLLNQHSERSNPLGKDFNYRQEFKKLDYYALKADIKNVLTDSQDWWPADWGNYTGLFIRLAWHAAGTYRMGDGRGGAGRGQQRFAPLNSWPDNASLDKARRLLWPVKQKYGQKISWADLFILAGNIALESSGFRTFGFGAGREDVWEPDNDVNWGDEKEWLAHRNSEALAGSNLAATEMGLIYVNPEGPQASGDPRSAAPFIRATFGNMAMDDEEIVALIAGGHTLGKTHGAAPADHVQADPEGAPIEQMGFGWANSYGTGVGKDAITSGLEVIWSQTPTQWSNYFFENLFKYEWVQERSPAGAIQWVAADAEAIIPDPFDPSIKRKPTMLTTDLTLRFDPEFEKISRRFLNDPQAFANAFARAWFKLTHRDMGPKARYLGPEVPAEDLIWQDPLPAASATPSSASIADAKAKIVALGLSAGELVSLAWASASTFRGGDKRGGANGAHIALSPQREWEVNKKAVETLTQIEELKASTQLSLADLIVLAGNVGVEQAAQAAGFNITVPFAPGRVDALQSQTDVESFQLLLGLADGFRNWKKQGVNTPAEVLLIDKAQQLTLTAPELTALIGGLRVLGTNWDGSQHGVFTQQVGVLSTDFFTNLLDMSNVWAPVDSTSEVFEGKDRKSGTVKFTATRNDLVFGSNSILRALAEVYAQADGKEKFVQDFVAAWTKVMNLDRFDLA.

Residues 98 to 219 (WHAAGTYRMG…LAATEMGLIY (122 aa)) constitute a cross-link (tryptophyl-tyrosyl-methioninium (Trp-Tyr) (with M-245)). Residue His-99 is the Proton acceptor of the active site. Residues 219 to 245 (YVNPEGPQASGDPRSAAPFIRATFGNM) constitute a cross-link (tryptophyl-tyrosyl-methioninium (Tyr-Met) (with W-98)). His-260 contributes to the heme b binding site.

It belongs to the peroxidase family. Peroxidase/catalase subfamily. In terms of assembly, homodimer or homotetramer. The cofactor is heme b. Post-translationally, formation of the three residue Trp-Tyr-Met cross-link is important for the catalase, but not the peroxidase activity of the enzyme.

It carries out the reaction H2O2 + AH2 = A + 2 H2O. The enzyme catalyses 2 H2O2 = O2 + 2 H2O. In terms of biological role, bifunctional enzyme with both catalase and broad-spectrum peroxidase activity. The polypeptide is Catalase-peroxidase (Acinetobacter baumannii (strain ATCC 17978 / DSM 105126 / CIP 53.77 / LMG 1025 / NCDC KC755 / 5377)).